A 340-amino-acid polypeptide reads, in one-letter code: Ketol-acid reductoisomerase (NADP(+)) (340 aa).

One can recognise a KARI N-terminal Rossmann domain in the interval valine 3 to threonine 183. Residues phenylalanine 26–glutamine 29, serine 54, and aspartate 84–glutamine 87 contribute to the NADP(+) site. Histidine 109 is an active-site residue. Glycine 135 contacts NADP(+). Residues threonine 184–isoleucine 329 enclose the KARI C-terminal knotted domain. Mg(2+)-binding residues include aspartate 192, glutamate 196, glutamate 228, and glutamate 232. Serine 253 lines the substrate pocket.

Belongs to the ketol-acid reductoisomerase family. Mg(2+) serves as cofactor.

It catalyses the reaction (2R)-2,3-dihydroxy-3-methylbutanoate + NADP(+) = (2S)-2-acetolactate + NADPH + H(+). The enzyme catalyses (2R,3R)-2,3-dihydroxy-3-methylpentanoate + NADP(+) = (S)-2-ethyl-2-hydroxy-3-oxobutanoate + NADPH + H(+). The protein operates within amino-acid biosynthesis; L-isoleucine biosynthesis; L-isoleucine from 2-oxobutanoate: step 2/4. It functions in the pathway amino-acid biosynthesis; L-valine biosynthesis; L-valine from pyruvate: step 2/4. In terms of biological role, involved in the biosynthesis of branched-chain amino acids (BCAA). Catalyzes an alkyl-migration followed by a ketol-acid reduction of (S)-2-acetolactate (S2AL) to yield (R)-2,3-dihydroxy-isovalerate. In the isomerase reaction, S2AL is rearranged via a Mg-dependent methyl migration to produce 3-hydroxy-3-methyl-2-ketobutyrate (HMKB). In the reductase reaction, this 2-ketoacid undergoes a metal-dependent reduction by NADPH to yield (R)-2,3-dihydroxy-isovalerate. The sequence is that of Ketol-acid reductoisomerase (NADP(+)) from Campylobacter curvus (strain 525.92).